A 252-amino-acid chain; its full sequence is uncharacterized protein (252 aa).

It belongs to the LarE family.

This is an uncharacterized protein from Methanocaldococcus jannaschii (strain ATCC 43067 / DSM 2661 / JAL-1 / JCM 10045 / NBRC 100440) (Methanococcus jannaschii).